A 175-amino-acid chain; its full sequence is Tumor necrosis factor receptor superfamily member 13C (175 aa).

Residues 1–71 are Extracellular-facing; it reads MGARRLRVRS…EGSALRPDVA (71 aa). One copy of the TNFR-Cys; truncated repeat lies at 21–38; the sequence is QCNQTECFDPLVRNCVSC. 2 disulfide bridges follow: C22–C35 and C27–C38. An N-linked (GlcNAc...) asparagine glycan is attached at N23. The essential for TNFSF13B/TALL1/BAFF/BLyS binding stretch occupies residues 29–34; that stretch reads DPLVRN. The helical; Signal-anchor for type III membrane protein transmembrane segment at 72 to 92 threads the bilayer; the sequence is LLVGAPALLGLILALTLVGLV. The Cytoplasmic segment spans residues 93–175; it reads SLVSWRWRQQ…VTTKTAGPEQ (83 aa). The interval 124–175 is disordered; it reads VPSSETPHASAPTWPPLKEDADSALPRHSVPVPATELGSTELVTTKTAGPEQ. The segment covering 160–175 has biased composition (polar residues); that stretch reads LGSTELVTTKTAGPEQ.

Highly expressed in spleen and testis; detected at lower levels in lung and thymus.

It is found in the membrane. Its function is as follows. B-cell receptor specific for TNFSF13B/TALL1/BAFF/BLyS. Promotes the survival of mature B-cells and the B-cell response. This Mus musculus (Mouse) protein is Tumor necrosis factor receptor superfamily member 13C (Tnfrsf13c).